The following is a 182-amino-acid chain: uncharacterized protein (182 aa).

This is an uncharacterized protein from Acanthamoeba polyphaga mimivirus (APMV).